A 537-amino-acid chain; its full sequence is CTP synthase (537 aa).

The segment at 1-268 (MNTKYIFVTG…DNLVCKKLKL (268 aa)) is amidoligase domain. Ser14 lines the CTP pocket. UTP is bound at residue Ser14. 15–20 (SLGKGI) provides a ligand contact to ATP. Position 55 (Tyr55) interacts with L-glutamine. Asp72 serves as a coordination point for ATP. Mg(2+) is bound by residues Asp72 and Glu142. CTP-binding positions include 149–151 (DIE), 189–194 (KTKPTQ), and Lys225. UTP-binding positions include 189–194 (KTKPTQ) and Lys225. The region spanning 293–535 (NIALVGKYVE…IKASLNSKHK (243 aa)) is the Glutamine amidotransferase type-1 domain. An L-glutamine-binding site is contributed by Gly355. Cys382 functions as the Nucleophile; for glutamine hydrolysis in the catalytic mechanism. Residues 383–386 (LGMQ), Glu406, and Arg463 contribute to the L-glutamine site. Catalysis depends on residues His508 and Glu510.

The protein belongs to the CTP synthase family. In terms of assembly, homotetramer.

The enzyme catalyses UTP + L-glutamine + ATP + H2O = CTP + L-glutamate + ADP + phosphate + 2 H(+). It catalyses the reaction L-glutamine + H2O = L-glutamate + NH4(+). It carries out the reaction UTP + NH4(+) + ATP = CTP + ADP + phosphate + 2 H(+). The protein operates within pyrimidine metabolism; CTP biosynthesis via de novo pathway; CTP from UDP: step 2/2. Allosterically activated by GTP, when glutamine is the substrate; GTP has no effect on the reaction when ammonia is the substrate. The allosteric effector GTP functions by stabilizing the protein conformation that binds the tetrahedral intermediate(s) formed during glutamine hydrolysis. Inhibited by the product CTP, via allosteric rather than competitive inhibition. Functionally, catalyzes the ATP-dependent amination of UTP to CTP with either L-glutamine or ammonia as the source of nitrogen. Regulates intracellular CTP levels through interactions with the four ribonucleotide triphosphates. The polypeptide is CTP synthase (Clostridium kluyveri (strain ATCC 8527 / DSM 555 / NBRC 12016 / NCIMB 10680 / K1)).